The sequence spans 859 residues: Rab effector MyRIP (859 aa).

In terms of domain architecture, RabBD spans 4 to 124; that stretch reads KLDLSGLTDD…AQSLEWFYNN (121 aa). An FYVE-type zinc finger spans residues 63–105; it reads CCMRCCSPFTFLVNTKRQCGDCKFNVCKSCCSYQKHEKAWVCC. Residues 143-560 form a myosin-binding region; sequence RKHRLESGAC…LDTHQVSDDL (418 aa). A PKA-binding region spans residues 193-209; sequence VALRVAEEAIEEAISKA. Residues 232-248 form a negative regulation of PKA-binding region; sequence LTEELATTILQKIIRKQ. A disordered region spans residues 251–285; the sequence is KSEQQVEEEPGWPHPQSCSTKVADEGTSASPGGYR. At Ser-298 the chain carries Phosphoserine. Disordered regions lie at residues 302-374, 386-629, and 783-812; these read EEAL…KPKS, VASA…SQSV, and DQKQRTQVQTIDTSRQQRRKLPAPPVKAEK. The span at 316–326 shows a compositional bias: basic and acidic residues; it reads QPRDQGQHPRA. Ser-350 carries the phosphoserine modification. Over residues 393 to 403 the composition is skewed to acidic residues; it reads MGSDSEEDFDW. Positions 435-450 are enriched in low complexity; that stretch reads PIAASPSSALSPNPEA. Basic and acidic residues-rich tracts occupy residues 484 to 494 and 607 to 617; these read AAEKMRLHGEL and SEPKTESENQK. Residues 495–856 are actin-binding; the sequence is DVNFNPQLAS…DLMEPALESA (362 aa). 2 stretches are compositionally biased toward polar residues: residues 618-629 and 787-796; these read ESLSSEDNSQSV and RTQVQTIDTS.

In terms of assembly, binds MYO5A, MYO7A and F-actin. Binds RAB27A that has been activated by GTP-binding via its N-terminus. Interacts with PRKAR2A. Interacts with components of the exocyst complex, including EXOC3 and EXOC4. As to expression, detected in brain, skin, heart, adrenal medulla, pancreas, intestine, liver, kidney, muscle and testis.

The protein resides in the cytoplasm. Its subcellular location is the perinuclear region. It is found in the cytoplasmic vesicle. It localises to the secretory vesicle. Its function is as follows. Rab effector protein involved in melanosome transport. Serves as link between melanosome-bound RAB27A and the motor proteins MYO5A and MYO7A. May link RAB27A-containing vesicles to actin filaments. Functions as a protein kinase A-anchoring protein (AKAP). May act as a scaffolding protein that links PKA to components of the exocytosis machinery, thus facilitating exocytosis, including insulin release. In Homo sapiens (Human), this protein is Rab effector MyRIP (MYRIP).